We begin with the raw amino-acid sequence, 76 residues long: ATP synthase subunit 9, mitochondrial (76 aa).

2 helical membrane passes run 11-31 (IGAG…GIVF) and 53-73 (ILGF…AFLI).

This sequence belongs to the ATPase C chain family. F-type ATPases have 2 components, CF(1) - the catalytic core - and CF(0) - the membrane proton channel. CF(1) has five subunits: alpha(3), beta(3), gamma(1), delta(1), epsilon(1). CF(0) has three main subunits: a, b and c.

The protein localises to the mitochondrion membrane. Functionally, this protein is one of the chains of the nonenzymatic membrane component (F0) of mitochondrial ATPase. This chain is ATP synthase subunit 9, mitochondrial (ATP9), found in Chondrus crispus (Carrageen Irish moss).